A 129-amino-acid chain; its full sequence is Protein Turandot B2 (129 aa).

Residues 1–21 (MNSATSLMCFALLLISPLCMG) form the signal peptide.

Belongs to the Turandot family.

Its subcellular location is the secreted. In terms of biological role, a humoral factor that may play a role in stress tolerance. The chain is Protein Turandot B2 (TotB2) from Drosophila erecta (Fruit fly).